The following is a 373-amino-acid chain: MTAESGPPPPQPEVLATVKEERGETAAGAGVPGEATGRGAGGRRRKRPLQRGKPPYSYIALIAMAIAHAPERRLTLGGIYKFITERFPFYRDNPKKWQNSIRHNLTLNDCFLKIPREAGRPGKGNYWALDPNAEDMFESGSFLRRRKRFKRSDLSTYPAYMHDAAAAAAAAAAAAAAAAIFPGAVPAARPPYPGAVYAGYAPPSLAAPPPVYYPAASPGPCRVFGLVPERPLSPELGPAPSGPGGSCAFASAGAPATTTGYQPAGCTGARPANPSAYAAAYAGPDGAYPQGAGSAIFAAAGRLAGPASPPAGGSSGGVETTVDFYGRTSPGQFGALGACYNPGGQLGGASAGAYHARHAAAYPGGIDRFVSAM.

Positions 19 to 51 (KEERGETAAGAGVPGEATGRGAGGRRRKRPLQR) are disordered. The segment covering 41 to 50 (GGRRRKRPLQ) has biased composition (basic residues). A DNA-binding region (fork-head) is located at residues 53–147 (KPPYSYIALI…ESGSFLRRRK (95 aa)).

Phosphorylated. In terms of tissue distribution, detected in adult brain, placenta, lung, liver, skeletal muscle, kidney, pancreas, heart, colon, small intestine testis and thymus. Expression was strongest in heart and pancreas.

It is found in the nucleus. Transcription factor that binds consensus sites on a variety of gene promoters and activate their transcription. Involved in proper palate formation, most probably through the expression of MSX1 and TGFB3 genes which are direct targets of this transcription factor. Also implicated in thyroid gland morphogenesis. May indirectly play a role in cell growth and migration through the regulation of WNT5A expression. The polypeptide is Forkhead box protein E1 (FOXE1) (Homo sapiens (Human)).